Consider the following 430-residue polypeptide: 3-phosphoshikimate 1-carboxyvinyltransferase (430 aa).

Positions 23, 24, and 28 each coordinate 3-phosphoshikimate. Lys23 provides a ligand contact to phosphoenolpyruvate. Phosphoenolpyruvate contacts are provided by Gly95 and Arg123. Residues Ser169, Gln171, Asp315, and Lys342 each contribute to the 3-phosphoshikimate site. Residue Gln171 participates in phosphoenolpyruvate binding. Asp315 (proton acceptor) is an active-site residue. Arg346 and Arg388 together coordinate phosphoenolpyruvate.

Belongs to the EPSP synthase family. In terms of assembly, monomer.

It localises to the cytoplasm. It carries out the reaction 3-phosphoshikimate + phosphoenolpyruvate = 5-O-(1-carboxyvinyl)-3-phosphoshikimate + phosphate. Its pathway is metabolic intermediate biosynthesis; chorismate biosynthesis; chorismate from D-erythrose 4-phosphate and phosphoenolpyruvate: step 6/7. Functionally, catalyzes the transfer of the enolpyruvyl moiety of phosphoenolpyruvate (PEP) to the 5-hydroxyl of shikimate-3-phosphate (S3P) to produce enolpyruvyl shikimate-3-phosphate and inorganic phosphate. The sequence is that of 3-phosphoshikimate 1-carboxyvinyltransferase from Streptococcus pyogenes serotype M3 (strain ATCC BAA-595 / MGAS315).